We begin with the raw amino-acid sequence, 230 residues long: Complex I assembly factor TMEM126B, mitochondrial (230 aa).

4 helical membrane passes run 70 to 92, 107 to 126, 139 to 161, and 196 to 218; these read LNIH…ANLV, YASL…KLFV, SCVL…ALAF, and AMAI…HYNI.

This sequence belongs to the TMEM126 family. As to quaternary structure, part of the mitochondrial complex I assembly/MCIA complex that comprises at least the core subunits TMEM126B, NDUFAF1, ECSIT and ACAD9 and complement subunits such as COA1 and TMEM186. Associates with the intermediate 370 kDa subcomplex of incompletely assembled complex I. Interacts with TMEM70.

Its subcellular location is the mitochondrion membrane. Functionally, as part of the MCIA complex, involved in the assembly of the mitochondrial complex I. Participates in constructing the membrane arm of complex I. This Mus musculus (Mouse) protein is Complex I assembly factor TMEM126B, mitochondrial.